We begin with the raw amino-acid sequence, 507 residues long: Keratin, type II cuticular Hb5 (507 aa).

Residues methionine 1–glutamate 123 are head. Residues glutamate 123–leucine 434 form the IF rod domain. Positions lysine 124–tyrosine 158 are coil 1A. A linker 1 region spans residues glutamine 159–leucine 168. Residues glutamate 169–alanine 269 are coil 1B. Lysine 229 is covalently cross-linked (Glycyl lysine isopeptide (Lys-Gly) (interchain with G-Cter in SUMO1)). A linker 12 region spans residues histidine 270–leucine 286. The interval asparagine 287–glutamate 430 is coil 2. The tail stretch occupies residues glutamate 431 to alanine 507.

Belongs to the intermediate filament family. As to quaternary structure, heterotetramer of two type I and two type II keratins.

The polypeptide is Keratin, type II cuticular Hb5 (Krt85) (Mus musculus (Mouse)).